We begin with the raw amino-acid sequence, 133 residues long: Ribosome-binding factor A (133 aa).

The protein belongs to the RbfA family. Monomer. Binds 30S ribosomal subunits, but not 50S ribosomal subunits or 70S ribosomes.

It is found in the cytoplasm. One of several proteins that assist in the late maturation steps of the functional core of the 30S ribosomal subunit. Associates with free 30S ribosomal subunits (but not with 30S subunits that are part of 70S ribosomes or polysomes). Required for efficient processing of 16S rRNA. May interact with the 5'-terminal helix region of 16S rRNA. This Yersinia enterocolitica protein is Ribosome-binding factor A.